The chain runs to 801 residues: Phenylalanine--tRNA ligase beta subunit (801 aa).

A tRNA-binding domain is found at 39–153; the sequence is AEGLSKLVVG…EGAIPGDSIF (115 aa). The B5 domain occupies 406-481; sequence TEPVEVSTTL…RIYGYEKLPT (76 aa). Positions 459, 465, 468, and 469 each coordinate Mg(2+). Residues 708-801 enclose the FDX-ACB domain; it reads TKYPSVSRDI…LVEKVNAEIR (94 aa).

The protein belongs to the phenylalanyl-tRNA synthetase beta subunit family. Type 1 subfamily. Tetramer of two alpha and two beta subunits. Mg(2+) serves as cofactor.

The protein resides in the cytoplasm. The catalysed reaction is tRNA(Phe) + L-phenylalanine + ATP = L-phenylalanyl-tRNA(Phe) + AMP + diphosphate + H(+). The sequence is that of Phenylalanine--tRNA ligase beta subunit from Streptococcus agalactiae serotype Ia (strain ATCC 27591 / A909 / CDC SS700).